A 225-amino-acid polypeptide reads, in one-letter code: C-type lectin domain-containing protein 91 (225 aa).

The first 21 residues, 1–21 (MRSTYILIIVPLIIIGGGVVA), serve as a signal peptide directing secretion. One can recognise a C-type lectin domain in the interval 85–215 (YSDSCYFIET…CTMAFKSICE (131 aa)). 2 cysteine pairs are disulfide-bonded: cysteine 106–cysteine 214 and cysteine 185–cysteine 206. The N-linked (GlcNAc...) asparagine glycan is linked to asparagine 217.

It localises to the secreted. In Caenorhabditis elegans, this protein is C-type lectin domain-containing protein 91 (clec-91).